Here is a 274-residue protein sequence, read N- to C-terminus: 2,3,4,5-tetrahydropyridine-2,6-dicarboxylate N-succinyltransferase (274 aa).

Arginine 106 and aspartate 143 together coordinate substrate.

It belongs to the transferase hexapeptide repeat family. Homotrimer.

It is found in the cytoplasm. The catalysed reaction is (S)-2,3,4,5-tetrahydrodipicolinate + succinyl-CoA + H2O = (S)-2-succinylamino-6-oxoheptanedioate + CoA. Its pathway is amino-acid biosynthesis; L-lysine biosynthesis via DAP pathway; LL-2,6-diaminopimelate from (S)-tetrahydrodipicolinate (succinylase route): step 1/3. The chain is 2,3,4,5-tetrahydropyridine-2,6-dicarboxylate N-succinyltransferase from Rickettsia rickettsii (strain Sheila Smith).